The chain runs to 358 residues: 3-dehydroquinate synthase (358 aa).

NAD(+) is bound by residues Asp70–Lys75, Gly104–Asp108, Thr128–Thr129, Lys141, Lys150, and Cys168–Thr171. Zn(2+)-binding residues include Glu183, His246, and His263.

Belongs to the sugar phosphate cyclases superfamily. Dehydroquinate synthase family. Co(2+) is required as a cofactor. Zn(2+) serves as cofactor. The cofactor is NAD(+).

Its subcellular location is the cytoplasm. It carries out the reaction 7-phospho-2-dehydro-3-deoxy-D-arabino-heptonate = 3-dehydroquinate + phosphate. It functions in the pathway metabolic intermediate biosynthesis; chorismate biosynthesis; chorismate from D-erythrose 4-phosphate and phosphoenolpyruvate: step 2/7. Functionally, catalyzes the conversion of 3-deoxy-D-arabino-heptulosonate 7-phosphate (DAHP) to dehydroquinate (DHQ). In Shewanella baltica (strain OS185), this protein is 3-dehydroquinate synthase.